Reading from the N-terminus, the 173-residue chain is Large ribosomal subunit protein uL16 (173 aa).

The protein belongs to the universal ribosomal protein uL16 family.

This is Large ribosomal subunit protein uL16 from Methanococcus maripaludis (strain DSM 14266 / JCM 13030 / NBRC 101832 / S2 / LL).